The primary structure comprises 411 residues: Lissencephaly-1 homolog (411 aa).

The region spanning 9–41 (QREELNQAIADYLGSNGYADSLEAFRKEADLST) is the LisH domain. Residues 56–83 (TSVIRLQKKVMELEAKLTEAEKEVIEGA) adopt a coiled-coil conformation. 7 WD repeats span residues 106–147 (GHRA…RSLK), 148–187 (GHTDSVQDVAFDAQGKLLASCSADLSIKLWDFQQTYECVK), 191–230 (GHDHNVSSVAFVPAGDYVLSASRDRTVKMWEVATGYCVKT), 233–272 (GHREWVRMVRVHIEGSIFATCSNDHTIRVWLTNSRDCKVE), 275–334 (DHEH…CLFT), 337–376 (GHDNWVRGLAFHPAGKYLVSASDDKTIRVWDLRNKRCMKT), and 379–411 (AHQHFCTSIDFHKAHPYVISGSVDQTVKVWECR).

Belongs to the WD repeat LIS1/nudF family.

The protein localises to the cytoplasm. It localises to the cytoskeleton. It is found in the microtubule organizing center. Its subcellular location is the centrosome. Its function is as follows. Positively regulates the activity of the minus-end directed microtubule motor protein dynein. May enhance dynein-mediated microtubule sliding by targeting dynein to the microtubule plus end. Required for several dynein- and microtubule-dependent processes. This is Lissencephaly-1 homolog from Drosophila ananassae (Fruit fly).